The primary structure comprises 401 residues: Exodeoxyribonuclease 7 large subunit (401 aa).

Belongs to the XseA family. Heterooligomer composed of large and small subunits.

Its subcellular location is the cytoplasm. The catalysed reaction is Exonucleolytic cleavage in either 5'- to 3'- or 3'- to 5'-direction to yield nucleoside 5'-phosphates.. Bidirectionally degrades single-stranded DNA into large acid-insoluble oligonucleotides, which are then degraded further into small acid-soluble oligonucleotides. The polypeptide is Exodeoxyribonuclease 7 large subunit (Clostridium botulinum (strain Loch Maree / Type A3)).